A 390-amino-acid chain; its full sequence is Cold-responsive protein kinase 1 (390 aa).

The 280-residue stretch at 41-320 folds into the Protein kinase domain; sequence FSAENKIGEG…VRLLTGEKDI (280 aa). Residues 47 to 55 and Lys-69 contribute to the ATP site; that span reads IGEGGFGSV. Tyr-114 bears the Phosphotyrosine mark. The active-site Proton acceptor is the Asp-169. Residues Ser-173 and Ser-202 each carry the phosphoserine modification. 2 positions are modified to phosphothreonine: Thr-203 and Thr-208. At Tyr-216 the chain carries Phosphotyrosine. Residues 345 to 390 are disordered; it reads TKTEQVNRQNYTNPSSSSNGSSRDHSNAYSSGASSANAGNTFSSTI. Residues 354–390 show a composition bias toward low complexity; that stretch reads NYTNPSSSSNGSSRDHSNAYSSGASSANAGNTFSSTI.

This sequence belongs to the protein kinase superfamily. Ser/Thr protein kinase family. Interacts with and phosphorylates 14-3-3 proteins. Binds to GRF6 at the plasma membrane. Post-translationally, autophosphorylated.

It localises to the cell membrane. The enzyme catalyses L-seryl-[protein] + ATP = O-phospho-L-seryl-[protein] + ADP + H(+). It carries out the reaction L-threonyl-[protein] + ATP = O-phospho-L-threonyl-[protein] + ADP + H(+). Its activity is regulated as follows. Activated by cold. Functionally, negative regulator of freezing tolerance that phosphorylates 14-3-3 proteins (e.g. GRF6) thus triggering their translocation from the cytosol to the nucleus in response to cold stress. This Arabidopsis thaliana (Mouse-ear cress) protein is Cold-responsive protein kinase 1.